The sequence spans 456 residues: tRNA modification GTPase MnmE (456 aa).

(6S)-5-formyl-5,6,7,8-tetrahydrofolate-binding residues include arginine 24, glutamate 81, and lysine 120. One can recognise a TrmE-type G domain in the interval glycine 216 to glycine 379. Asparagine 226 lines the K(+) pocket. GTP-binding positions include asparagine 226–serine 231, threonine 245–threonine 251, aspartate 270–glycine 273, and asparagine 335–aspartate 338. A Mg(2+)-binding site is contributed by serine 230. The K(+) site is built by threonine 245, isoleucine 247, and threonine 250. Threonine 251 contacts Mg(2+). A (6S)-5-formyl-5,6,7,8-tetrahydrofolate-binding site is contributed by lysine 456.

The protein belongs to the TRAFAC class TrmE-Era-EngA-EngB-Septin-like GTPase superfamily. TrmE GTPase family. In terms of assembly, homodimer. Heterotetramer of two MnmE and two MnmG subunits. K(+) serves as cofactor.

It is found in the cytoplasm. Exhibits a very high intrinsic GTPase hydrolysis rate. Involved in the addition of a carboxymethylaminomethyl (cmnm) group at the wobble position (U34) of certain tRNAs, forming tRNA-cmnm(5)s(2)U34. This chain is tRNA modification GTPase MnmE, found in Pseudomonas fluorescens (strain Pf0-1).